The primary structure comprises 135 residues: Retinol-binding protein 1 (135 aa).

An important for interaction with STRA6 region spans residues 22 to 32 (RALDVNVALRK). All-trans-retinol is bound by residues K41, M63, and Q109.

The protein belongs to the calycin superfamily. Fatty-acid binding protein (FABP) family. Interacts (only as retinol-free apoprotein) with STRA6.

It is found in the cytoplasm. The protein resides in the lipid droplet. In terms of biological role, cytoplasmic retinol-binding protein. Accepts retinol from the transport protein STRA6, and thereby contributes to retinol uptake, storage and retinoid homeostasis. In Mus musculus (Mouse), this protein is Retinol-binding protein 1 (Rbp1).